Here is a 60-residue protein sequence, read N- to C-terminus: Putative SERF-like protein (60 aa).

A compositionally biased stretch (basic and acidic residues) spans 1–53 (MTRGNQRDLARQKNQKKQADLTKGKRTDNLTVEQRKARDAELMREKQKKKEEA). Positions 1–60 (MTRGNQRDLARQKNQKKQADLTKGKRTDNLTVEQRKARDAELMREKQKKKEEAAAAGTSK) are disordered.

This sequence belongs to the SERF family.

This chain is Putative SERF-like protein, found in Drosophila melanogaster (Fruit fly).